Consider the following 175-residue polypeptide: Large ribosomal subunit protein uL22 (175 aa).

A disordered region spans residues 113 to 175 (VESRPVKDQR…EASETKGGSD (63 aa)). Positions 136 to 154 (KTAGRAPAKKAGASSGATK) are enriched in low complexity. Over residues 166-175 (EASETKGGSD) the composition is skewed to basic and acidic residues.

This sequence belongs to the universal ribosomal protein uL22 family. As to quaternary structure, part of the 50S ribosomal subunit.

Its function is as follows. This protein binds specifically to 23S rRNA; its binding is stimulated by other ribosomal proteins, e.g. L4, L17, and L20. It is important during the early stages of 50S assembly. It makes multiple contacts with different domains of the 23S rRNA in the assembled 50S subunit and ribosome. In terms of biological role, the globular domain of the protein is located near the polypeptide exit tunnel on the outside of the subunit, while an extended beta-hairpin is found that lines the wall of the exit tunnel in the center of the 70S ribosome. This chain is Large ribosomal subunit protein uL22, found in Mycobacterium leprae (strain TN).